A 588-amino-acid polypeptide reads, in one-letter code: Transmembrane protein 201 homolog (588 aa).

The Nuclear portion of the chain corresponds to 1-212 (MEVAAAVGVI…FFFAGGSTCE (212 aa)). A helical transmembrane segment spans residues 213–233 (ALHFGCLISSIILFLANIDFL). Topologically, residues 234–254 (QQDAGASLINLPKALQDILPE) are perinuclear space. A helical transmembrane segment spans residues 255–275 (VYKYSFVINFLIFTTHLIAAF). Topologically, residues 276-280 (NNKCR) are nuclear. Residues 281-301 (VTLPDLLLPILLILAMLTVLT) traverse the membrane as a helical segment. The Perinuclear space segment spans residues 302–309 (SSDNLSQD). The helical transmembrane segment at 310–330 (VALVRGACASFSTILSMAVTL) threads the bilayer. At 331-564 (LPRKKLHKKR…SGAWQCRVIG (234 aa)) the chain is on the nuclear side. The interval 378–457 (RRSPHTPSAS…QSTRSSHFKP (80 aa)) is disordered. Residues 384 to 396 (PSASPPAMNSSPP) show a composition bias toward low complexity. 2 stretches are compositionally biased toward polar residues: residues 418-430 (NMQS…NNHV) and 441-452 (MAAQSVAQSTRS). A helical membrane pass occupies residues 565 to 585 (ILFALVFIVLIMQIGLFYVLF). Residues 586 to 588 (TRN) lie on the Perinuclear space side of the membrane.

The protein belongs to the TMEM201 family.

The protein localises to the nucleus inner membrane. In terms of biological role, plays a role in nuclear migration in hypodermal cells. The protein is Transmembrane protein 201 homolog of Caenorhabditis elegans.